Reading from the N-terminus, the 264-residue chain is ATP synthase subunit a (264 aa).

5 helical membrane passes run 39–59 (LDTL…FYIV), 97–117 (VAPL…MDLV), 139–159 (TADP…VIFY), 205–225 (LFGN…LPWW), and 239–259 (LLVI…YISL).

It belongs to the ATPase A chain family. F-type ATPases have 2 components, CF(1) - the catalytic core - and CF(0) - the membrane proton channel. CF(1) has five subunits: alpha(3), beta(3), gamma(1), delta(1), epsilon(1). CF(0) has three main subunits: a(1), b(2) and c(9-12). The alpha and beta chains form an alternating ring which encloses part of the gamma chain. CF(1) is attached to CF(0) by a central stalk formed by the gamma and epsilon chains, while a peripheral stalk is formed by the delta and b chains.

The protein localises to the cell inner membrane. Functionally, key component of the proton channel; it plays a direct role in the translocation of protons across the membrane. The polypeptide is ATP synthase subunit a (Coxiella burnetii (strain CbuK_Q154) (Coxiella burnetii (strain Q154))).